Reading from the N-terminus, the 375-residue chain is MAATAQYLPRNNSLPSNPLMHPDSDRMHQGTTYREVQKMMHQEYLQGLATNAGHHMSLTPHQWLPNPASDWGSGSHLGVQAEHAKSGVQSNREDLSSGFHHHRSHLVHQQSPSSHAWAQSGGHHLAPMSPSSNSHQPLIYSQSSYTNLNGMLGPQASSLHHSMRDPLHDDPGVHDTQVDSPPQHLGHHQDHSDEDAPSSDDLEQFAKQFKQRRIKLGFTQADVGLALGTLYGNVFSQTTICRFEALQLSFKNMCKLKPLLNKWLEETDSTTGSPTNLDKIAAQGRKRKKRTSIEVGVKGALENHFLKCPKPSAHEITSLADSLQLEKEVVRVWFCNRRQKEKRMTPAGVPHPPMEDVYSQAETPPLHHTLQTSVQ.

Disordered regions lie at residues 1-29 (MAATAQYLPRNNSLPSNPLMHPDSDRMHQ), 67-138 (PASD…HQPL), and 151-200 (MLGP…PSSD). Composition is skewed to polar residues over residues 107 to 117 (VHQQSPSSHAW), 129 to 138 (SPSSNSHQPL), and 151 to 160 (MLGPQASSLH). Residues 162 to 177 (SMRDPLHDDPGVHDTQ) are compositionally biased toward basic and acidic residues. The POU-specific domain occupies 194–268 (EDAPSSDDLE…LLNKWLEETD (75 aa)). The homeobox DNA-binding region spans 286-345 (KRKKRTSIEVGVKGALENHFLKCPKPSAHEITSLADSLQLEKEVVRVWFCNRRQKEKRMT).

This sequence belongs to the POU transcription factor family. Class-3 subfamily. As to expression, in embryos at the neural fold stage, localized primarily in the anterior neural plate, and localized mostly in the anterior region of the nerve cord of neurula stage embryos. In tailbud stages, expressed predominantly in the eye and brain, with weak expression along the length of the nerve cord. In adults, expressed in skin and brain.

It localises to the nucleus. In terms of biological role, acts as a transcription factor. May play a role in neuronal differentiation. This Xenopus laevis (African clawed frog) protein is POU domain, class 3, transcription factor 1-A (pou3f1-a).